The sequence spans 483 residues: Aspartyl/glutamyl-tRNA(Asn/Gln) amidotransferase subunit B (483 aa).

The protein belongs to the GatB/GatE family. GatB subfamily. As to quaternary structure, heterotrimer of A, B and C subunits.

It carries out the reaction L-glutamyl-tRNA(Gln) + L-glutamine + ATP + H2O = L-glutaminyl-tRNA(Gln) + L-glutamate + ADP + phosphate + H(+). The enzyme catalyses L-aspartyl-tRNA(Asn) + L-glutamine + ATP + H2O = L-asparaginyl-tRNA(Asn) + L-glutamate + ADP + phosphate + 2 H(+). In terms of biological role, allows the formation of correctly charged Asn-tRNA(Asn) or Gln-tRNA(Gln) through the transamidation of misacylated Asp-tRNA(Asn) or Glu-tRNA(Gln) in organisms which lack either or both of asparaginyl-tRNA or glutaminyl-tRNA synthetases. The reaction takes place in the presence of glutamine and ATP through an activated phospho-Asp-tRNA(Asn) or phospho-Glu-tRNA(Gln). This is Aspartyl/glutamyl-tRNA(Asn/Gln) amidotransferase subunit B from Rickettsia felis (strain ATCC VR-1525 / URRWXCal2) (Rickettsia azadi).